A 191-amino-acid polypeptide reads, in one-letter code: Protein GrpE (191 aa).

The protein belongs to the GrpE family. Homodimer.

The protein localises to the cytoplasm. In terms of biological role, participates actively in the response to hyperosmotic and heat shock by preventing the aggregation of stress-denatured proteins, in association with DnaK and GrpE. It is the nucleotide exchange factor for DnaK and may function as a thermosensor. Unfolded proteins bind initially to DnaJ; upon interaction with the DnaJ-bound protein, DnaK hydrolyzes its bound ATP, resulting in the formation of a stable complex. GrpE releases ADP from DnaK; ATP binding to DnaK triggers the release of the substrate protein, thus completing the reaction cycle. Several rounds of ATP-dependent interactions between DnaJ, DnaK and GrpE are required for fully efficient folding. This is Protein GrpE from Listeria monocytogenes serotype 4a (strain HCC23).